The chain runs to 475 residues: Ankyrin repeat, SAM and basic leucine zipper domain-containing protein 1 (475 aa).

A compositionally biased stretch (low complexity) spans 1–10 (MAAGRLRGLA). Positions 1 to 24 (MAAGRLRGLAVAGGGESSESDDDG) are disordered. A phosphoserine mark is found at serine 17, serine 18, and serine 20. ANK repeat units follow at residues 45 to 74 (EKNETFKKALTTGDISLVQELLNSGISVDS), 78 to 107 (YGWTPLMYAASVSNVELVRVLLDRGANANF), 110 to 144 (DKQTILITTCSSRGSEEQIVKCVELLLSRNADPNV), 148 to 177 (RLMTPIMYAARDGHPQVVALLVAHGAEVNT), 181 to 210 (SGYTALTWAARQGHKNVVLKLLELGADKML), and 214 to 243 (DGNIPSEIAKRYKHLEIFSLLSLSLNPLKG). Positions 272–334 (SYTAFGDLEV…KILAALKELD (63 aa)) constitute an SAM domain.

As to quaternary structure, interacts with DDX4, PIWIL1, RANBP9 and TDRD1.

The protein resides in the cytoplasm. Its function is as follows. Plays a central role during spermatogenesis by repressing transposable elements and preventing their mobilization, which is essential for the germline integrity. Acts via the piRNA metabolic process, which mediates the repression of transposable elements during meiosis by forming complexes composed of piRNAs and Piwi proteins and governs the methylation and subsequent repression of transposons. Its association with pi-bodies suggests a participation in the primary piRNAs metabolic process. Required prior to the pachytene stage to facilitate the production of multiple types of piRNAs, including those associated with repeats involved in the regulation of retrotransposons. May act by mediating protein-protein interactions during germ cell maturation. The protein is Ankyrin repeat, SAM and basic leucine zipper domain-containing protein 1 (ASZ1) of Carollia perspicillata (Seba's short-tailed bat).